Here is a 483-residue protein sequence, read N- to C-terminus: Serine protease HTRA4 (483 aa).

A signal peptide spans 1–30; that stretch reads MSFQRLWAVRTQFLLLWLLLPAVPVPWAEA. The IGFBP N-terminal domain occupies 35-113; that stretch reads VSLPCPDACD…GAWLGTCGCA (79 aa). 6 disulfide bridges follow: cysteine 39/cysteine 65, cysteine 43/cysteine 67, cysteine 48/cysteine 68, cysteine 54/cysteine 71, cysteine 79/cysteine 93, and cysteine 87/cysteine 110. The interval 208–368 is serine protease; that stretch reads GSGFIVSEDG…IPSDRIRQFL (161 aa). Active-site charge relay system residues include histidine 224, aspartate 254, and serine 332. One can recognise a PDZ domain in the interval 379 to 471; that stretch reads KAPLQKKYLG…LSIIVLRGSQ (93 aa).

Belongs to the peptidase S1C family.

The protein localises to the secreted. Its function is as follows. Serine protease. The protein is Serine protease HTRA4 (Htra4) of Mus musculus (Mouse).